The following is a 340-amino-acid chain: MYG1 protein C27H6.8 (340 aa).

Belongs to the MYG1 family.

The protein is MYG1 protein C27H6.8 of Caenorhabditis elegans.